Consider the following 938-residue polypeptide: Phosphoenolpyruvate carboxylase (938 aa).

Active-site residues include H151 and K591.

The protein belongs to the PEPCase type 1 family. Requires Mg(2+) as cofactor.

It carries out the reaction oxaloacetate + phosphate = phosphoenolpyruvate + hydrogencarbonate. Functionally, forms oxaloacetate, a four-carbon dicarboxylic acid source for the tricarboxylic acid cycle. This is Phosphoenolpyruvate carboxylase from Roseiflexus castenholzii (strain DSM 13941 / HLO8).